A 236-amino-acid polypeptide reads, in one-letter code: 2,3,4,5-tetrahydropyridine-2,6-dicarboxylate N-acetyltransferase (236 aa).

The protein belongs to the transferase hexapeptide repeat family. DapH subfamily.

The enzyme catalyses (S)-2,3,4,5-tetrahydrodipicolinate + acetyl-CoA + H2O = L-2-acetamido-6-oxoheptanedioate + CoA. It functions in the pathway amino-acid biosynthesis; L-lysine biosynthesis via DAP pathway; LL-2,6-diaminopimelate from (S)-tetrahydrodipicolinate (acetylase route): step 1/3. Its function is as follows. Catalyzes the transfer of an acetyl group from acetyl-CoA to tetrahydrodipicolinate. The chain is 2,3,4,5-tetrahydropyridine-2,6-dicarboxylate N-acetyltransferase from Oceanobacillus iheyensis (strain DSM 14371 / CIP 107618 / JCM 11309 / KCTC 3954 / HTE831).